The chain runs to 105 residues: uncharacterized protein (105 aa).

This is an uncharacterized protein from Saccharomyces cerevisiae (strain ATCC 204508 / S288c) (Baker's yeast).